A 75-amino-acid polypeptide reads, in one-letter code: Protein Tlp homolog (75 aa).

A disordered region spans residues 53-75 (REALDGMREEIKDEARDKKNGYM).

This sequence belongs to the Tlp family.

The chain is Protein Tlp homolog from Clostridium botulinum (strain Langeland / NCTC 10281 / Type F).